The sequence spans 187 residues: Calmodulin-like protein 30 (187 aa).

The disordered stretch occupies residues 21-47 (KPSRMFSRDRQSSGLSSPGPGGFSQPS). Residues 32-47 (SSGLSSPGPGGFSQPS) show a composition bias toward low complexity. EF-hand domains are found at residues 46 to 81 (PSVN…LGQE), 82 to 117 (RAIE…SGGI), 129 to 152 (FDLN…LGER), and 153 to 187 (CSLE…SNNV). Ca(2+)-binding residues include aspartate 59, aspartate 61, aspartate 63, lysine 65, glutamate 70, aspartate 95, aspartate 97, aspartate 99, glutamate 106, aspartate 130, asparagine 132, aspartate 134, lysine 136, glutamate 141, aspartate 166, aspartate 168, aspartate 170, and glutamate 177.

Belongs to the calmodulin family.

Its function is as follows. Potential calcium sensor. The polypeptide is Calmodulin-like protein 30 (Arabidopsis thaliana (Mouse-ear cress)).